Consider the following 623-residue polypeptide: Probable methyltransferase PMT8 (623 aa).

Residues 1–13 (MMRGRSDGGLKKR) lie on the Cytoplasmic side of the membrane. The chain crosses the membrane as a helical; Signal-anchor for type II membrane protein span at residues 14–34 (LIASVCVVALFVCFLFMYYGS). The Lumenal segment spans residues 35–623 (SSQGASALEY…LTSESLRDSE (589 aa)). 3 N-linked (GlcNAc...) asparagine glycosylation sites follow: Asn-204, Asn-350, and Asn-588.

The protein belongs to the methyltransferase superfamily.

Its subcellular location is the golgi apparatus membrane. The polypeptide is Probable methyltransferase PMT8 (Arabidopsis thaliana (Mouse-ear cress)).